The following is a 1386-amino-acid chain: YLP motif-containing protein 1 (1386 aa).

Disordered stretches follow at residues Met1–Arg336 and Thr517–Arg1068. The segment covering Tyr14–Ala27 has biased composition (pro residues). Composition is skewed to low complexity over residues Ala31 to Gly50 and Leu59 to His80. 5 stretches are compositionally biased toward pro residues: residues His81–Met93, Gln102–Pro114, Pro148–Tyr158, Met166–Tyr176, and Tyr184–Ile203. A compositionally biased stretch (polar residues) spans Ser237–Arg259. Positions Thr260–Gly270 are enriched in basic residues. The span at Asp276–Ala285 shows a compositional bias: basic and acidic residues. The span at Pro302–Pro317 shows a compositional bias: pro residues. Residues Pro320 to Glu333 are compositionally biased toward acidic residues. 3 stretches are compositionally biased toward pro residues: residues Thr517 to Ala558, Pro566 to Met603, and Pro641 to Gln650. Polar residues predominate over residues Ser651–Gln667. Lys683 bears the N6-methyllysine mark. Residues Arg706 to Gly722 show a composition bias toward basic and acidic residues. The span at Met746–Lys761 shows a compositional bias: pro residues. Residues Pro762–Pro779 are compositionally biased toward low complexity. Pro residues-rich tracts occupy residues Thr781 to Val803 and Pro848 to Val878. Lys894 participates in a covalent cross-link: Glycyl lysine isopeptide (Lys-Gly) (interchain with G-Cter in SUMO2). Composition is skewed to basic and acidic residues over residues Ile904 to Phe938, Thr945 to Pro1014, Gly1023 to Met1033, and Arg1049 to Arg1068. Residue Lys951 forms a Glycyl lysine isopeptide (Lys-Gly) (interchain with G-Cter in SUMO2) linkage. The involved in interaction with PPP1CA stretch occupies residues Lys1336–Asp1343.

As to quaternary structure, interacts with PPP1CA and NCOA5. Forms a complex with ILF2, ILF3, KHDRBS1, RBMX, NCOA5 and PPP1CA.

It is found in the nucleus. The protein localises to the nucleus speckle. Plays a role in the reduction of telomerase activity during differentiation of embryonic stem cells by binding to the core promoter of TERT and controlling its down-regulation. This Mus musculus (Mouse) protein is YLP motif-containing protein 1 (Ylpm1).